Consider the following 633-residue polypeptide: ATP-dependent zinc metalloprotease FtsH (633 aa).

Over 1-19 the chain is Cytoplasmic; sequence MTPSNEPGKQDQIPQPGPT. A helical membrane pass occupies residues 20-40; the sequence is IPNQYSFLWLSAAIFLMFLWL. The Periplasmic portion of the chain corresponds to 41–133; the sequence is QGNNQQQQQE…SRSGRPWWQE (93 aa). A helical membrane pass occupies residues 134–154; it reads LILGFLPWILLLALMFWFWGA. Topologically, residues 155-633 are cytoplasmic; the sequence is AQKRMTQGGG…LEEARSRETA (479 aa). Residue 226 to 233 participates in ATP binding; that stretch reads GPPGTGKT. Zn(2+) is bound at residue His-447. The active site involves Glu-448. Zn(2+) contacts are provided by His-451 and Asp-523.

In the central section; belongs to the AAA ATPase family. It in the C-terminal section; belongs to the peptidase M41 family. As to quaternary structure, homohexamer. It depends on Zn(2+) as a cofactor.

The protein localises to the cell inner membrane. Acts as a processive, ATP-dependent zinc metallopeptidase for both cytoplasmic and membrane proteins. Plays a role in the quality control of integral membrane proteins. The polypeptide is ATP-dependent zinc metalloprotease FtsH (Marinobacter nauticus (strain ATCC 700491 / DSM 11845 / VT8) (Marinobacter aquaeolei)).